We begin with the raw amino-acid sequence, 459 residues long: Serine protease HTRA1 (459 aa).

A signal peptide spans 1–18 (MTMLWLAVLLTCGAPAAL). Residues 22-92 (SGVGCPARCD…NGGVTRCQCP (71 aa)) enclose the IGFBP N-terminal domain. Cystine bridges form between cysteine 26/cysteine 51, cysteine 30/cysteine 53, cysteine 35/cysteine 54, cysteine 42/cysteine 57, cysteine 65/cysteine 80, cysteine 74/cysteine 89, cysteine 91/cysteine 109, and cysteine 98/cysteine 134. In terms of domain architecture, Kazal-like spans 74–136 (CASGLRCVRN…IPIQRGDCQQ (63 aa)). Positions 183–343 (GSGFIVSEDG…IPSDKIRKFM (161 aa)) are serine protease. Residues histidine 199, aspartate 229, and serine 307 each act as charge relay system in the active site. In terms of domain architecture, PDZ spans 344–446 (AESHNRQSTG…LQMVIRRGNE (103 aa)).

This sequence belongs to the peptidase S1C family. Forms homotrimers. In the presence of substrate, may form higher-order multimers in a PDZ-independent manner.

It localises to the cell membrane. It is found in the secreted. The protein resides in the cytoplasm. Its subcellular location is the cytosol. Its function is as follows. Serine protease with a variety of targets, including extracellular matrix proteins and proteoglycans such as biglycan, syndecan-4 and glypican-4. Through cleavage of proteoglycans, may release soluble FGF-glycosaminoglycan complexes that promote the range and intensity of FGF signals in the extracellular space. Consequently, facilitates inductive processes in the developing embryo, such as posteriorization, mesoderm induction and neuronal differentiation. Regulates the availability of insulin-like growth factors (IGFs) by cleaving IGF-binding proteins. Inhibits signaling mediated by TGF-beta family members. Consequently, may regulate many physiological processes. Intracellularly, degrades TSC2, leading to the activation of TSC2 downstream targets. The sequence is that of Serine protease HTRA1 (htra1) from Xenopus laevis (African clawed frog).